A 204-amino-acid chain; its full sequence is 8-oxoguanine DNA glycosylase/AP lyase (204 aa).

Active-site residues include K129 and D147.

This sequence belongs to the type-2 OGG1 family.

It catalyses the reaction 2'-deoxyribonucleotide-(2'-deoxyribose 5'-phosphate)-2'-deoxyribonucleotide-DNA = a 3'-end 2'-deoxyribonucleotide-(2,3-dehydro-2,3-deoxyribose 5'-phosphate)-DNA + a 5'-end 5'-phospho-2'-deoxyribonucleoside-DNA + H(+). In terms of biological role, catalyzes the excision of an oxidatively damaged form of guanine (7,8-dihydro-8-oxoguanine = 8-oxoG) from DNA. Also cleaves the DNA backbone at apurinic/apyrimidinic sites (AP sites). This is 8-oxoguanine DNA glycosylase/AP lyase from Thermoplasma acidophilum (strain ATCC 25905 / DSM 1728 / JCM 9062 / NBRC 15155 / AMRC-C165).